The sequence spans 135 residues: Small ribosomal subunit protein uS8 (135 aa).

Belongs to the universal ribosomal protein uS8 family. In terms of assembly, part of the 30S ribosomal subunit. Contacts proteins S5 and S12.

Functionally, one of the primary rRNA binding proteins, it binds directly to 16S rRNA central domain where it helps coordinate assembly of the platform of the 30S subunit. The chain is Small ribosomal subunit protein uS8 from Corynebacterium urealyticum (strain ATCC 43042 / DSM 7109).